An 88-amino-acid chain; its full sequence is Putative membrane protein insertion efficiency factor (88 aa).

The interval 66 to 88 (DFVPPKKEKNADSEHSCKAHHHH) is disordered. Over residues 69–82 (PPKKEKNADSEHSC) the composition is skewed to basic and acidic residues.

This sequence belongs to the UPF0161 family.

Its subcellular location is the cell membrane. Functionally, could be involved in insertion of integral membrane proteins into the membrane. The sequence is that of Putative membrane protein insertion efficiency factor from Listeria monocytogenes serotype 4b (strain CLIP80459).